Here is an 82-residue protein sequence, read N- to C-terminus: Penaeidin-3h (82 aa).

A signal peptide spans 1–19 (MRLVVCLVFLASFALVCQG). At Gln20 the chain carries Pyrrolidone carboxylic acid. 2 disulfides stabilise this stretch: Cys55-Cys73 and Cys67-Cys74. The residue at position 81 (Ser81) is a Serine amide.

This sequence belongs to the penaeidin family.

Its subcellular location is the cytoplasmic granule. Functionally, antibacterial and antifungal activity. Presents chitin-binding activity. The polypeptide is Penaeidin-3h (Penaeus vannamei (Whiteleg shrimp)).